A 162-amino-acid polypeptide reads, in one-letter code: Large ribosomal subunit protein uL11 (162 aa).

Residues 1–27 form a disordered region; it reads MAGTIEVLVPGGEANPGPPLGPELGPT.

Belongs to the universal ribosomal protein uL11 family. As to quaternary structure, part of the 50S ribosomal subunit. Forms part of the ribosomal stalk which helps the ribosome interact with GTP-bound translation factors. Forms a heptameric L10(L12)2(L12)2(L12)2 complex, where L10 forms an elongated spine to which 3 L12 dimers bind in a sequential fashion.

Functionally, forms part of the ribosomal stalk which helps the ribosome interact with GTP-bound translation factors. The protein is Large ribosomal subunit protein uL11 of Haloarcula marismortui (strain ATCC 43049 / DSM 3752 / JCM 8966 / VKM B-1809) (Halobacterium marismortui).